The primary structure comprises 203 residues: SCO2-like protein RT0576 (203 aa).

Residues 42 to 203 form the Thioredoxin domain; that stretch reads KDNIKIGEAF…KEIMEFLRNE (162 aa). The Cu cation site is built by C80, C84, and H170.

It belongs to the SCO1/2 family.

This is SCO2-like protein RT0576 from Rickettsia typhi (strain ATCC VR-144 / Wilmington).